The primary structure comprises 193 residues: MIKRLVDIGAVKFGAFKLSSGLESPFYVDLRSVLGEPELFQWVIERYEAVLSGLEFDVIIGVATGGIPYASVLGYRLKKPMGYVRDEAKGYGTGRQIEGADVAGKRAAVVDDVLTTGKSVLNAIRAVRASGGEVAGVVVFLDRGQCGAEAVKREAGVYVYSVYKMRELLEELRPHIGEERYRSVLDYLSQWRC.

5-phospho-alpha-D-ribose 1-diphosphate is bound by residues Arg85, Lys89, and 111–119 (DDVLTTGKS). Residues Thr115 and Arg143 each contribute to the orotate site.

Belongs to the purine/pyrimidine phosphoribosyltransferase family. PyrE subfamily. As to quaternary structure, homodimer. Requires Mg(2+) as cofactor.

It catalyses the reaction orotidine 5'-phosphate + diphosphate = orotate + 5-phospho-alpha-D-ribose 1-diphosphate. The protein operates within pyrimidine metabolism; UMP biosynthesis via de novo pathway; UMP from orotate: step 1/2. In terms of biological role, catalyzes the transfer of a ribosyl phosphate group from 5-phosphoribose 1-diphosphate to orotate, leading to the formation of orotidine monophosphate (OMP). This is Orotate phosphoribosyltransferase from Pyrobaculum aerophilum (strain ATCC 51768 / DSM 7523 / JCM 9630 / CIP 104966 / NBRC 100827 / IM2).